A 230-amino-acid polypeptide reads, in one-letter code: Large ribosomal subunit protein uL1 (230 aa).

The protein belongs to the universal ribosomal protein uL1 family. In terms of assembly, part of the 50S ribosomal subunit.

Functionally, binds directly to 23S rRNA. The L1 stalk is quite mobile in the ribosome, and is involved in E site tRNA release. In terms of biological role, protein L1 is also a translational repressor protein, it controls the translation of the L11 operon by binding to its mRNA. This Oenococcus oeni (strain ATCC BAA-331 / PSU-1) protein is Large ribosomal subunit protein uL1.